Here is a 338-residue protein sequence, read N- to C-terminus: Histidinol-phosphate aminotransferase (338 aa).

An N6-(pyridoxal phosphate)lysine modification is found at Lys204.

Belongs to the class-II pyridoxal-phosphate-dependent aminotransferase family. Histidinol-phosphate aminotransferase subfamily. The cofactor is pyridoxal 5'-phosphate.

It carries out the reaction L-histidinol phosphate + 2-oxoglutarate = 3-(imidazol-4-yl)-2-oxopropyl phosphate + L-glutamate. It participates in amino-acid biosynthesis; L-histidine biosynthesis; L-histidine from 5-phospho-alpha-D-ribose 1-diphosphate: step 7/9. The sequence is that of Histidinol-phosphate aminotransferase from Pyrococcus furiosus (strain ATCC 43587 / DSM 3638 / JCM 8422 / Vc1).